An 866-amino-acid chain; its full sequence is Sphingomyelin phosphodiesterase 4 (866 aa).

2 positions are modified to phosphoserine: Ser-169 and Ser-285. Thr-708 bears the Phosphothreonine mark. At Ser-792 the chain carries Phosphoserine. Residues Leu-822–Leu-842 traverse the membrane as a helical segment.

Mg(2+) is required as a cofactor. As to expression, widely expressed, with highest levels in heart and skeletal muscle. Expressed in skeletal muscle (at protein level). In terms of tissue distribution, expressed in skeletal muscle but a lower levels than isoform 1 (at protein level).

The protein resides in the endoplasmic reticulum membrane. It is found in the golgi apparatus membrane. The protein localises to the nucleus envelope. It localises to the cell membrane. Its subcellular location is the sarcolemma. It carries out the reaction a sphingomyelin + H2O = phosphocholine + an N-acylsphing-4-enine + H(+). Activated by phosphatidylserine and tumor necrosis factor (TNF). Inhibited by scyphostatin. Functionally, catalyzes the hydrolysis of membrane sphingomyelin to form phosphorylcholine and ceramide. It has a relevant role in the homeostasis of membrane sphingolipids, thereby influencing membrane integrity, and endoplasmic reticulum organization and function. May sensitize cells to DNA damage-induced apoptosis. In skeletal muscle, mediates TNF-stimulated oxidant production. This chain is Sphingomyelin phosphodiesterase 4, found in Homo sapiens (Human).